Here is a 346-residue protein sequence, read N- to C-terminus: 3-dehydroquinate synthase (346 aa).

NAD(+) is bound by residues 61–66 (DGEAYK), 95–99 (GVIGD), 119–120 (TT), K132, and K141. 3 residues coordinate Zn(2+): E174, H233, and H250.

This sequence belongs to the sugar phosphate cyclases superfamily. Dehydroquinate synthase family. Requires NAD(+) as cofactor. The cofactor is Co(2+). Zn(2+) is required as a cofactor.

Its subcellular location is the cytoplasm. It catalyses the reaction 7-phospho-2-dehydro-3-deoxy-D-arabino-heptonate = 3-dehydroquinate + phosphate. The protein operates within metabolic intermediate biosynthesis; chorismate biosynthesis; chorismate from D-erythrose 4-phosphate and phosphoenolpyruvate: step 2/7. Its function is as follows. Catalyzes the conversion of 3-deoxy-D-arabino-heptulosonate 7-phosphate (DAHP) to dehydroquinate (DHQ). The chain is 3-dehydroquinate synthase from Wolinella succinogenes (strain ATCC 29543 / DSM 1740 / CCUG 13145 / JCM 31913 / LMG 7466 / NCTC 11488 / FDC 602W) (Vibrio succinogenes).